A 586-amino-acid chain; its full sequence is Ezrin (586 aa).

One can recognise an FERM domain in the interval 2 to 295; it reads PKPINVRVTT…GNHELYMRRR (294 aa). Lysine 60 is subject to N6-acetyllysine. The [IL]-x-C-x-x-[DE] motif motif lies at 115–120; it reads IYCPPE. Tyrosine 146 carries the post-translational modification Phosphotyrosine; by PDGFR. Residues 244 to 586 form an interaction with SCYL3 region; that stretch reads EIRNISFNDK…KQRIDEFEAM (343 aa). A coiled-coil region spans residues 302-462; it reads VQQMKAQARE…QDDLVKTKEE (161 aa). The tract at residues 306–338 is disordered; sequence KAQAREEKHQKQLERQQLETEKKRRETVEREKE. Residues 308–338 are compositionally biased toward basic and acidic residues; the sequence is QAREEKHQKQLERQQLETEKKRRETVEREKE. At serine 366 the chain carries Phosphoserine. The residue at position 478 (tyrosine 478) is a Phosphotyrosine. Residue serine 535 is modified to Phosphoserine. Threonine 567 is modified (phosphothreonine; by ROCK2 and PKC/PRKCI).

As to quaternary structure, interacts with PODXL and NHERF2. Found in a complex with EZR, PODXL and NHERF2. Interacts with PALS1. Interacts with MCC, PLEKHG6, SCYL3/PACE1, NHERF1 and TMEM8B. Interacts (when phosphorylated) with FES/FPS. Interacts with dimeric S100P, the interaction may be activating through unmasking of F-actin binding sites. Identified in complexes that contain VIM, EZR, AHNAK, BFSP1, BFSP2, ANK2, PLEC, PRX and spectrin. Detected in a complex composed of at least EZR, AHNAK, PPL and PRX. Interacts with PDPN (via cytoplasmic domain); activates RHOA and promotes epithelial-mesenchymal transition. Interacts with SPN/CD43 cytoplasmic tail, CD44 and ICAM2. Interacts with SLC9A3; interaction targets SLC9A3 to the apical membrane. Interacts with SLC9A1; regulates interactions of SLC9A1 with cytoskeletal and promotes stress fiber formation. Interacts with CLIC5; may work together in a complex which also includes RDX and MYO6 to stabilize linkages between the plasma membrane and subjacent actin cytoskeleton at the base of stereocilia. Phosphorylated by tyrosine-protein kinases. Phosphorylation by ROCK2 suppresses the head-to-tail association of the N-terminal and C-terminal halves resulting in an opened conformation which is capable of actin and membrane-binding. In terms of processing, S-nitrosylation is induced by interferon-gamma and oxidatively-modified low-densitity lipoprotein (LDL(ox)) possibly implicating the iNOS-S100A8/9 transnitrosylase complex. Glomerular epithelium cell (podocyte). Expressed in cerebrum, cerebellum and hippocampus (at protein level). Expressed in the small intestine, lung, kidney and ovaries.

The protein resides in the apical cell membrane. Its subcellular location is the cell projection. The protein localises to the microvillus membrane. It localises to the ruffle membrane. It is found in the cytoplasm. The protein resides in the cell cortex. Its subcellular location is the cytoskeleton. The protein localises to the microvillus. A head-to-tail association, of the N-terminal and C-terminal halves results in a closed conformation (inactive form) which is incapable of actin or membrane-binding. In terms of biological role, probably involved in connections of major cytoskeletal structures to the plasma membrane. In epithelial cells, required for the formation of microvilli and membrane ruffles on the apical pole. Along with PLEKHG6, required for normal macropinocytosis. This Rattus norvegicus (Rat) protein is Ezrin (Ezr).